Consider the following 143-residue polypeptide: Large ribosomal subunit protein uL15 (143 aa).

A disordered region spans residues M1 to H58. Residues R21 to G31 show a composition bias toward gly residues.

This sequence belongs to the universal ribosomal protein uL15 family. In terms of assembly, part of the 50S ribosomal subunit.

Its function is as follows. Binds to the 23S rRNA. In Ectopseudomonas mendocina (strain ymp) (Pseudomonas mendocina), this protein is Large ribosomal subunit protein uL15.